The primary structure comprises 553 residues: CTP synthase (553 aa).

The interval 1–275 (MPTETEYDPS…DQYVMEQFDM (275 aa)) is amidoligase domain. Ser-24 serves as a coordination point for CTP. Position 24 (Ser-24) interacts with UTP. 25–30 (GLGKGI) serves as a coordination point for ATP. Tyr-65 provides a ligand contact to L-glutamine. Asp-82 serves as a coordination point for ATP. 2 residues coordinate Mg(2+): Asp-82 and Glu-150. CTP-binding positions include 157–159 (DIE), 196–201 (KTKPTQ), and Lys-232. UTP-binding positions include 196–201 (KTKPTQ) and Lys-232. The region spanning 308-540 (KYALEDAYMS…LDAVLERADV (233 aa)) is the Glutamine amidotransferase type-1 domain. Gly-362 is an L-glutamine binding site. Cys-389 functions as the Nucleophile; for glutamine hydrolysis in the catalytic mechanism. Residues 390 to 393 (LGFQ), Glu-413, and Arg-470 contribute to the L-glutamine site. Active-site residues include His-513 and Glu-515.

It belongs to the CTP synthase family. As to quaternary structure, homotetramer.

It catalyses the reaction UTP + L-glutamine + ATP + H2O = CTP + L-glutamate + ADP + phosphate + 2 H(+). The enzyme catalyses L-glutamine + H2O = L-glutamate + NH4(+). The catalysed reaction is UTP + NH4(+) + ATP = CTP + ADP + phosphate + 2 H(+). It functions in the pathway pyrimidine metabolism; CTP biosynthesis via de novo pathway; CTP from UDP: step 2/2. Allosterically activated by GTP, when glutamine is the substrate; GTP has no effect on the reaction when ammonia is the substrate. The allosteric effector GTP functions by stabilizing the protein conformation that binds the tetrahedral intermediate(s) formed during glutamine hydrolysis. Inhibited by the product CTP, via allosteric rather than competitive inhibition. Functionally, catalyzes the ATP-dependent amination of UTP to CTP with either L-glutamine or ammonia as the source of nitrogen. Regulates intracellular CTP levels through interactions with the four ribonucleotide triphosphates. The polypeptide is CTP synthase (Halobacterium salinarum (strain ATCC 29341 / DSM 671 / R1)).